The primary structure comprises 265 residues: Tyrosine protein kinase-interacting protein (265 aa).

Acidic residues predominate over residues methionine 1–proline 14. Residues methionine 1–isoleucine 49 are disordered. The Cytoplasmic portion of the chain corresponds to methionine 1–alanine 238. Basic and acidic residues predominate over residues glutamate 15–leucine 26. Residues serine 27 to aspartate 43 show a composition bias toward low complexity. Tyrosine 123 carries the post-translational modification Phosphotyrosine; by host LCK. A Phosphotyrosine; by host modification is found at tyrosine 136. Residues glutamate 155 to tyrosine 164 are CSKH/LBD2. Residues lysine 172–proline 192 form a disordered region. Residues methionine 183 to proline 192 form an SH3B/LBD1 region. The span at methionine 183 to proline 192 shows a compositional bias: pro residues. Residues isoleucine 225–asparagine 234 are SH3 binding. The helical transmembrane segment at isoleucine 239–leucine 259 threads the bilayer. The Extracellular portion of the chain corresponds to histidine 260–serine 265.

As to quaternary structure, binds host LCK, human WDR48 and human NXF1/TAP. Forms a complex with activated LCK and STAT1 and STAT3. Phosphorylation on Tyr-123 acts as a docking site for the recruitment of STATs 1 and 3.

Its subcellular location is the host cell membrane. In terms of biological role, plays a critical role in virus induced T-cell transformation. Binds to T-cell-specific tyrosine kinase LCK SH2 and SH3 domains, thereby activating its kinase activity. Once phosphorylated by host LCK, forms a complex with at least STAT 1 and 3, resulting on the phosphorylation of STAT3 and presumably STAT1, and their migration into the nucleus to induce transcription of target genes. Stimulates host ILF3/NF-AT-90 activity. Association with host NXF1/TAP transduces the signal up-regulating surface expression of adhesion molecules as well as activating NF-kappa-B activity. Acts synergistically with StpC to stimulate NF-kappa-B activity and interleukin-2 gene expression. Activation of NF-kappa-B protects lymphocytes from apoptosis, thereby facilitating viral induced cell transformation. May cause down-regulation of host LCK and cell apoptosis when stably overexpressed ex vivo. Interaction with WDR48 induce degradation of T-cell receptor in a lysosome-dependent fashion, when both proteins are overexpressed. The biological effect of this interaction remains controversial since no T-cell receptor degradation is observed in infected cells. The chain is Tyrosine protein kinase-interacting protein from Saimiriine herpesvirus 2 (strain 484) (SaHV-2).